Reading from the N-terminus, the 621-residue chain is Ubiquitin-like-specific protease 1 (621 aa).

Residue Ser2 is modified to N-acetylserine. 2 positions are modified to phosphoserine: Ser21 and Ser25. Disordered stretches follow at residues 116 to 150 (FDGS…ENYS) and 169 to 196 (RRRI…SNCD). Residues 124–141 (SGNSDVESRSSGSRSSDV) are compositionally biased toward low complexity. Thr179 is subject to Phosphothreonine. Residues 179 to 196 (TPSTSPISSLASQKSNCD) show a composition bias toward polar residues. A Phosphoserine modification is found at Ser264. The protease stretch occupies residues 432-621 (NIEITVRDFK…AHLILTDALK (190 aa)). Active-site residues include His514, Asp531, and Cys580.

This sequence belongs to the peptidase C48 family.

It catalyses the reaction Hydrolysis of the alpha-linked peptide bond in the sequence Gly-Gly-|-Ala-Thr-Tyr at the C-terminal end of the small ubiquitin-like modifier (SUMO) propeptide, Smt3, leading to the mature form of the protein. A second reaction involves the cleavage of an epsilon-linked peptide bond between the C-terminal glycine of the mature SUMO and the lysine epsilon-amino group of the target protein.. Its function is as follows. Protease that catalyzes two essential functions in the SUMO pathway: processing of full-length SMT3 to its mature form and deconjugation of SMT3 from targeted proteins. Has an essential role in the G2/M phase of the cell cycle. This Saccharomyces cerevisiae (strain ATCC 204508 / S288c) (Baker's yeast) protein is Ubiquitin-like-specific protease 1 (ULP1).